Consider the following 873-residue polypeptide: K(+)/H(+) antiporter 1 (873 aa).

The Extracellular portion of the chain corresponds to 1–23 (MANTVGGILSGVNPFHYNSSSPL). A helical transmembrane segment spans residues 24–44 (TLFLFQACLILLVCNLIHIPF). The Cytoplasmic portion of the chain corresponds to 45-51 (SMMRQPK). Residues 52-72 (VISEVISGVILGPTIFGQIPN) traverse the membrane as a helical segment. At 73 to 82 (YTNTIFPTSS) the chain is on the extracellular side. A helical membrane pass occupies residues 83-103 (IPGLNLVANLGIILFMFFLGL). The Cytoplasmic segment spans residues 104 to 116 (EVDIAFIKKHLKK). The chain crosses the membrane as a helical span at residues 117–137 (ALVIGIVTLAVPFGFGCLLAI). Over 138–154 (PLFHTYANKTEGERHIK) the chain is Extracellular. A helical transmembrane segment spans residues 155 to 175 (FSVFMVFIAVSISVTAFPVLC). Residues 176–188 (RILNELRLIKDRA) are Cytoplasmic-facing. A helical transmembrane segment spans residues 189–209 (GIVVLAAGIINDIMGWILLAL). Residues 210–220 (SIILSSAEGSP) lie on the Extracellular side of the membrane. Residues 221-241 (VNTVYILLITFAWFLIYFFPL) form a helical membrane-spanning segment. Topologically, residues 242–267 (KYLLRWVLIRTHELDRSKPSPLATMC) are cytoplasmic. A helical transmembrane segment spans residues 268–288 (ILFIMFISAYFTDIIGVHPIF). Topologically, residues 289–316 (GAFIAGLVVPRDDHYVVKLTERMEDIPN) are extracellular. A helical membrane pass occupies residues 317 to 337 (IVFIPIYFAVAGLNVDLTLLN). Topologically, residues 338–341 (EGRD) are cytoplasmic. The helical transmembrane segment at 342 to 362 (WGYVFATIGIAIFTKIISGTL) threads the bilayer. Topologically, residues 363-375 (TAKLTGLFWREAT) are extracellular. A helical transmembrane segment spans residues 376–396 (AAGVLMSCKGIVEIVVLTVGL). The Cytoplasmic portion of the chain corresponds to 397 to 404 (NAGIISRK). Residues 405 to 425 (IFGMFVLMALVSTFVTTPLTQ) form a helical membrane-spanning segment. Residues 426-726 (LVYPDSYRDG…DRFKRKRFNL (301 aa)) are Extracellular-facing. S557 carries the post-translational modification Phosphoserine. A Glycyl lysine isopeptide (Lys-Gly) (interchain with G-Cter in ubiquitin) cross-link involves residue K562. Residues 727-747 (LLPKPYLTQSDYLGLYLLLLI) traverse the membrane as a helical segment. Over 748-873 (CYRDGYNNDN…TLIVHHFSSE (126 aa)) the chain is Cytoplasmic.

The protein belongs to the monovalent cation:proton antiporter 2 (CPA2) transporter (TC 2.A.37) family.

Its subcellular location is the membrane. Its function is as follows. Potassium-proton antiport. The chain is K(+)/H(+) antiporter 1 (KHA1) from Saccharomyces cerevisiae (strain ATCC 204508 / S288c) (Baker's yeast).